Reading from the N-terminus, the 252-residue chain is Aquaporin TIP4-4 (252 aa).

2 helical membrane passes run 20 to 40 (AVLAELILTFLFVFAGVGSAM) and 53 to 73 (VVGLTAVALAHTLVVAVMVSA). The NPA 1 motif lies at 83-85 (NPA). 3 consecutive transmembrane segments (helical) span residues 105-125 (VAAQLLGSTLACLLLAFLAVA), 143-163 (GVLMEAVLTFSLLFAVYATVV), and 168-188 (AVGGMGPLLVGLVVGANVLAG). Residues 197 to 199 (NPA) carry the NPA 2 motif. The helical transmembrane segment at 216-236 (VYWVGPLIGGPLAGLVYDGLF) threads the bilayer.

This sequence belongs to the MIP/aquaporin (TC 1.A.8) family. TIP (TC 1.A.8.10) subfamily.

Its subcellular location is the vacuole membrane. In terms of biological role, aquaporins facilitate the transport of water and small neutral solutes across cell membranes. This chain is Aquaporin TIP4-4 (TIP4-4), found in Zea mays (Maize).